The primary structure comprises 1452 residues: Receptor-type tyrosine-protein phosphatase mu (1452 aa).

The signal sequence occupies residues 1–20 (MRGLGTCLATLAGLLLTAAG). Topologically, residues 21-742 (ETFSGGCLFD…PEKQTDHTVK (722 aa)) are extracellular. Positions 22 to 184 (TFSGGCLFDE…VKVLGHPCTR (163 aa)) constitute an MAM domain. A disulfide bridge connects residues cysteine 27 and cysteine 36. N-linked (GlcNAc...) asparagine glycosylation is found at asparagine 72, asparagine 92, asparagine 131, and asparagine 249. Intrachain disulfides connect cysteine 96/cysteine 182 and cysteine 206/cysteine 260. The region spanning 186-277 (PHFLRIQNVE…VGISNYAELV (92 aa)) is the Ig-like C2-type domain. Fibronectin type-III domains are found at residues 284–379 (PIAP…CADP), 382–480 (GPRK…TDED), 482–587 (PGAV…SAPS), and 589–671 (PAYE…DSLQ). 8 N-linked (GlcNAc...) asparagine glycosylation sites follow: asparagine 406, asparagine 414, asparagine 454, asparagine 534, asparagine 544, asparagine 598, asparagine 651, and asparagine 681. Residues 743–764 (IAGVIAGILLFVIIFLGVVLVM) traverse the membrane as a helical segment. At 765 to 1452 (KKRKLAKKRK…EVALEYLNSG (688 aa)) the chain is on the cytoplasmic side. Residue serine 821 is modified to Phosphoserine. Tyrosine-protein phosphatase domains lie at 900–1154 (FKEE…ILEA) and 1186–1448 (IKEE…ALEY). Residues aspartate 1063, 1095–1101 (CSAGAGR), and glutamine 1139 each bind substrate. Catalysis depends on cysteine 1095, which acts as the Phosphocysteine intermediate. Cysteine 1389 serves as the catalytic Phosphocysteine intermediate.

This sequence belongs to the protein-tyrosine phosphatase family. Receptor class 2B subfamily. In terms of assembly, homodimer.

Its subcellular location is the cell membrane. The enzyme catalyses O-phospho-L-tyrosyl-[protein] + H2O = L-tyrosyl-[protein] + phosphate. Receptor protein-tyrosine phosphatase that mediates homotypic cell-cell interactions and plays a role in adipogenic differentiation via modulation of p120 catenin/CTNND1 phosphorylation. Promotes CTNND1 dephosphorylation and prevents its cytoplasmic localization where it inhibits SLC2A4 membrane trafficking. In turn, SLC2A4 is directed to the plasma membrane and performs its glucose transporter function. The sequence is that of Receptor-type tyrosine-protein phosphatase mu (PTPRM) from Homo sapiens (Human).